The sequence spans 390 residues: Stearoyl-[acyl-carrier-protein] 9-desaturase, chloroplastic (390 aa).

Residues 1 to 27 (MALKLCFPPHKMPSFPDARIRSHRVFM) constitute a chloroplast transit peptide. Residues Glu-132, Glu-170, His-173, Glu-223, Glu-256, and His-259 each coordinate Fe cation.

The protein belongs to the fatty acid desaturase type 2 family. As to quaternary structure, homodimer. Fe(2+) is required as a cofactor.

The protein resides in the plastid. It localises to the chloroplast. It catalyses the reaction octadecanoyl-[ACP] + 2 reduced [2Fe-2S]-[ferredoxin] + O2 + 2 H(+) = (9Z)-octadecenoyl-[ACP] + 2 oxidized [2Fe-2S]-[ferredoxin] + 2 H2O. The protein operates within lipid metabolism; fatty acid metabolism. Functionally, converts stearoyl-ACP to oleoyl-ACP by introduction of a cis double bond between carbons 9 and 10 of the acyl chain. The sequence is that of Stearoyl-[acyl-carrier-protein] 9-desaturase, chloroplastic from Olea europaea (Common olive).